The sequence spans 301 residues: Pyridoxal 5'-phosphate synthase subunit PdxS (301 aa).

Asp31 serves as a coordination point for D-ribose 5-phosphate. Lys88 acts as the Schiff-base intermediate with D-ribose 5-phosphate in catalysis. A D-ribose 5-phosphate-binding site is contributed by Gly160. Lys172 contacts D-glyceraldehyde 3-phosphate. Residues Gly221 and 242-243 (GS) each bind D-ribose 5-phosphate.

The protein belongs to the PdxS/SNZ family. In terms of assembly, in the presence of PdxT, forms a dodecamer of heterodimers.

It carries out the reaction aldehydo-D-ribose 5-phosphate + D-glyceraldehyde 3-phosphate + L-glutamine = pyridoxal 5'-phosphate + L-glutamate + phosphate + 3 H2O + H(+). It functions in the pathway cofactor biosynthesis; pyridoxal 5'-phosphate biosynthesis. Catalyzes the formation of pyridoxal 5'-phosphate from ribose 5-phosphate (RBP), glyceraldehyde 3-phosphate (G3P) and ammonia. The ammonia is provided by the PdxT subunit. Can also use ribulose 5-phosphate and dihydroxyacetone phosphate as substrates, resulting from enzyme-catalyzed isomerization of RBP and G3P, respectively. This is Pyridoxal 5'-phosphate synthase subunit PdxS from Methanosarcina mazei (strain ATCC BAA-159 / DSM 3647 / Goe1 / Go1 / JCM 11833 / OCM 88) (Methanosarcina frisia).